The sequence spans 186 residues: Dirigent protein 7 (186 aa).

An N-terminal signal peptide occupies residues 1-21 (MAKLILIIVTQILLIAAVVSA). 3 N-linked (GlcNAc...) asparagine glycosylation sites follow: Asn-70, Asn-91, and Asn-126.

It belongs to the plant dirigent protein family. As to quaternary structure, homodimer.

It localises to the secreted. It is found in the extracellular space. The protein localises to the apoplast. Functionally, dirigent proteins impart stereoselectivity on the phenoxy radical-coupling reaction, yielding optically active lignans from two molecules of coniferyl alcohol in the biosynthesis of lignans, flavonolignans, and alkaloids and thus plays a central role in plant secondary metabolism. This is Dirigent protein 7 (DIR7) from Arabidopsis thaliana (Mouse-ear cress).